The chain runs to 709 residues: D-(-)-3-hydroxybutyrate oligomer hydrolase (709 aa).

The first 26 residues, Met1–Ala26, serve as a signal peptide directing secretion. The segment at Gly58–Pro77 is disordered. Ser305 (charge relay system) is an active-site residue.

The protein belongs to the D-(-)-3-hydroxybutyrate oligomer hydrolase family.

It localises to the secreted. The catalysed reaction is (3R)-hydroxybutanoate dimer + H2O = 2 (R)-3-hydroxybutanoate + H(+). It participates in lipid metabolism; butanoate metabolism. Participates in the degradation of poly-3-hydroxybutyrate (PHB). It works downstream of poly(3-hydroxybutyrate) depolymerase, hydrolyzing D(-)-3-hydroxybutyrate oligomers of various length (3HB-oligomers) into 3HB-monomers. This is D-(-)-3-hydroxybutyrate oligomer hydrolase from Paracidovorax citrulli (strain AAC00-1) (Acidovorax citrulli).